Reading from the N-terminus, the 350-residue chain is Holliday junction branch migration complex subunit RuvB (350 aa).

Residues 1–184 form a large ATPase domain (RuvB-L) region; sequence MSKTPERLVT…FGIPIRLEFY (184 aa). ATP contacts are provided by residues Leu-23, Arg-24, Gly-65, Lys-68, Thr-69, Thr-70, 131 to 133, Arg-174, Tyr-184, and Arg-221; that span reads EDF. Thr-69 is a binding site for Mg(2+). Positions 185 to 255 are small ATPAse domain (RuvB-S); sequence TIEELERIVL…LADKALSLLD (71 aa). Positions 258 to 350 are head domain (RuvB-H); that stretch reads PIGLDQMDRR…GLFPDQSEED (93 aa). DNA is bound by residues Arg-294, Arg-313, and Arg-318.

The protein belongs to the RuvB family. In terms of assembly, homohexamer. Forms an RuvA(8)-RuvB(12)-Holliday junction (HJ) complex. HJ DNA is sandwiched between 2 RuvA tetramers; dsDNA enters through RuvA and exits via RuvB. An RuvB hexamer assembles on each DNA strand where it exits the tetramer. Each RuvB hexamer is contacted by two RuvA subunits (via domain III) on 2 adjacent RuvB subunits; this complex drives branch migration. In the full resolvosome a probable DNA-RuvA(4)-RuvB(12)-RuvC(2) complex forms which resolves the HJ.

The protein resides in the cytoplasm. The catalysed reaction is ATP + H2O = ADP + phosphate + H(+). In terms of biological role, the RuvA-RuvB-RuvC complex processes Holliday junction (HJ) DNA during genetic recombination and DNA repair, while the RuvA-RuvB complex plays an important role in the rescue of blocked DNA replication forks via replication fork reversal (RFR). RuvA specifically binds to HJ cruciform DNA, conferring on it an open structure. The RuvB hexamer acts as an ATP-dependent pump, pulling dsDNA into and through the RuvAB complex. RuvB forms 2 homohexamers on either side of HJ DNA bound by 1 or 2 RuvA tetramers; 4 subunits per hexamer contact DNA at a time. Coordinated motions by a converter formed by DNA-disengaged RuvB subunits stimulates ATP hydrolysis and nucleotide exchange. Immobilization of the converter enables RuvB to convert the ATP-contained energy into a lever motion, pulling 2 nucleotides of DNA out of the RuvA tetramer per ATP hydrolyzed, thus driving DNA branch migration. The RuvB motors rotate together with the DNA substrate, which together with the progressing nucleotide cycle form the mechanistic basis for DNA recombination by continuous HJ branch migration. Branch migration allows RuvC to scan DNA until it finds its consensus sequence, where it cleaves and resolves cruciform DNA. The protein is Holliday junction branch migration complex subunit RuvB of Beijerinckia indica subsp. indica (strain ATCC 9039 / DSM 1715 / NCIMB 8712).